The sequence spans 88 residues: Small ribosomal subunit protein uS15 (88 aa).

Belongs to the universal ribosomal protein uS15 family. Part of the 30S ribosomal subunit. Forms a bridge to the 50S subunit in the 70S ribosome, contacting the 23S rRNA.

Functionally, one of the primary rRNA binding proteins, it binds directly to 16S rRNA where it helps nucleate assembly of the platform of the 30S subunit by binding and bridging several RNA helices of the 16S rRNA. Its function is as follows. Forms an intersubunit bridge (bridge B4) with the 23S rRNA of the 50S subunit in the ribosome. The protein is Small ribosomal subunit protein uS15 of Geobacter sp. (strain M21).